Reading from the N-terminus, the 327-residue chain is Leucotoxin LukD (327 aa).

The first 26 residues, 1 to 26, serve as a signal peptide directing secretion; sequence MKIEKLGKSSVASSIALLLLSNTVDA.

Belongs to the aerolysin family. In terms of assembly, toxicity requires sequential binding and synergistic association of a class S and a class F component which form heterooligomeric complexes. LukE (class S) associates with LukD (class F). LukD can also associate with HlgA.

It is found in the secreted. In terms of biological role, part of a bi-component leucotoxin that acts by forming pores in the membrane of the target cells. LukE-LukD is as effective as the Panton-Valentine leucocidin (PVL) for inducing dermonecrosis when injected in the rabbit skin, but not hemolytic and poorly leucotoxic on human blood cells compared to other leucotoxins expressed by S.aureus. HlgA-LukD is a Ca(2+) channel inducer. This is Leucotoxin LukD (lukD) from Staphylococcus aureus.